Consider the following 294-residue polypeptide: ATP phosphoribosyltransferase (294 aa).

It belongs to the ATP phosphoribosyltransferase family. Long subfamily. Mg(2+) is required as a cofactor.

It localises to the cytoplasm. The enzyme catalyses 1-(5-phospho-beta-D-ribosyl)-ATP + diphosphate = 5-phospho-alpha-D-ribose 1-diphosphate + ATP. Its pathway is amino-acid biosynthesis; L-histidine biosynthesis; L-histidine from 5-phospho-alpha-D-ribose 1-diphosphate: step 1/9. Its activity is regulated as follows. Feedback inhibited by histidine. In terms of biological role, catalyzes the condensation of ATP and 5-phosphoribose 1-diphosphate to form N'-(5'-phosphoribosyl)-ATP (PR-ATP). Has a crucial role in the pathway because the rate of histidine biosynthesis seems to be controlled primarily by regulation of HisG enzymatic activity. This is ATP phosphoribosyltransferase from Pelodictyon phaeoclathratiforme (strain DSM 5477 / BU-1).